The primary structure comprises 633 residues: tRNA uridine 5-carboxymethylaminomethyl modification enzyme MnmG (633 aa).

FAD contacts are provided by residues 15 to 20 (GAGHAG), Ile-127, and Ser-182. Residue 276-290 (GPRYCPSIEDKIVRF) participates in NAD(+) binding. Gln-373 serves as a coordination point for FAD.

It belongs to the MnmG family. In terms of assembly, homodimer. Heterotetramer of two MnmE and two MnmG subunits. Requires FAD as cofactor.

Its subcellular location is the cytoplasm. Its function is as follows. NAD-binding protein involved in the addition of a carboxymethylaminomethyl (cmnm) group at the wobble position (U34) of certain tRNAs, forming tRNA-cmnm(5)s(2)U34. In Streptococcus agalactiae serotype Ia (strain ATCC 27591 / A909 / CDC SS700), this protein is tRNA uridine 5-carboxymethylaminomethyl modification enzyme MnmG.